The following is a 366-amino-acid chain: tRNA N6-adenosine threonylcarbamoyltransferase (366 aa).

The Fe cation site is built by H119 and H123. Substrate-binding positions include L142–G146, D175, G188, D192, and N281. Residue D309 coordinates Fe cation.

Belongs to the KAE1 / TsaD family. Fe(2+) is required as a cofactor.

The protein resides in the cytoplasm. It carries out the reaction L-threonylcarbamoyladenylate + adenosine(37) in tRNA = N(6)-L-threonylcarbamoyladenosine(37) in tRNA + AMP + H(+). Required for the formation of a threonylcarbamoyl group on adenosine at position 37 (t(6)A37) in tRNAs that read codons beginning with adenine. Is involved in the transfer of the threonylcarbamoyl moiety of threonylcarbamoyl-AMP (TC-AMP) to the N6 group of A37, together with TsaE and TsaB. TsaD likely plays a direct catalytic role in this reaction. The protein is tRNA N6-adenosine threonylcarbamoyltransferase of Synechococcus sp. (strain JA-3-3Ab) (Cyanobacteria bacterium Yellowstone A-Prime).